A 361-amino-acid polypeptide reads, in one-letter code: S-adenosylmethionine decarboxylase proenzyme (361 aa).

Active-site residues include Glu13 and Glu16. The active-site Schiff-base intermediate with substrate; via pyruvic acid is the Ser73. Ser73 bears the Pyruvic acid (Ser); by autocatalysis mark. The active-site Proton donor; for catalytic activity is Cys87. Active-site proton acceptor; for processing activity residues include Ser236 and His249.

This sequence belongs to the eukaryotic AdoMetDC family. Pyruvate serves as cofactor. In terms of processing, is synthesized initially as an inactive proenzyme. Formation of the active enzyme involves a self-maturation process in which the active site pyruvoyl group is generated from an internal serine residue via an autocatalytic post-translational modification. Two non-identical subunits are generated from the proenzyme in this reaction, and the pyruvate is formed at the N-terminus of the alpha chain, which is derived from the carboxyl end of the proenzyme. The post-translation cleavage follows an unusual pathway, termed non-hydrolytic serinolysis, in which the side chain hydroxyl group of the serine supplies its oxygen atom to form the C-terminus of the beta chain, while the remainder of the serine residue undergoes an oxidative deamination to produce ammonia and the pyruvoyl group blocking the N-terminus of the alpha chain.

The enzyme catalyses S-adenosyl-L-methionine + H(+) = S-adenosyl 3-(methylsulfanyl)propylamine + CO2. It functions in the pathway amine and polyamine biosynthesis; S-adenosylmethioninamine biosynthesis; S-adenosylmethioninamine from S-adenosyl-L-methionine: step 1/1. The sequence is that of S-adenosylmethionine decarboxylase proenzyme (SAMDC1) from Nicotiana sylvestris (Wood tobacco).